The sequence spans 350 residues: tRNA U34 carboxymethyltransferase (350 aa).

Carboxy-S-adenosyl-L-methionine contacts are provided by residues K101, W125, K130, G150, 172–174 (DPS), 208–209 (LE), M224, Y228, and R343.

This sequence belongs to the class I-like SAM-binding methyltransferase superfamily. CmoB family. In terms of assembly, homotetramer.

It carries out the reaction carboxy-S-adenosyl-L-methionine + 5-hydroxyuridine(34) in tRNA = 5-carboxymethoxyuridine(34) in tRNA + S-adenosyl-L-homocysteine + H(+). Functionally, catalyzes carboxymethyl transfer from carboxy-S-adenosyl-L-methionine (Cx-SAM) to 5-hydroxyuridine (ho5U) to form 5-carboxymethoxyuridine (cmo5U) at position 34 in tRNAs. The chain is tRNA U34 carboxymethyltransferase from Psychrobacter arcticus (strain DSM 17307 / VKM B-2377 / 273-4).